Reading from the N-terminus, the 197-residue chain is UPF0725 protein At5g41640 (197 aa).

This sequence belongs to the UPF0725 (EMB2204) family.

This is UPF0725 protein At5g41640 from Arabidopsis thaliana (Mouse-ear cress).